The sequence spans 178 residues: Signaling threshold-regulating transmembrane adapter 1 (178 aa).

The Extracellular portion of the chain corresponds to methionine 1 to tryptophan 23. N-linked (GlcNAc...) asparagine glycosylation is present at asparagine 6. Residues glycine 24 to leucine 44 traverse the membrane as a helical; Signal-anchor for type III membrane protein segment. The Cytoplasmic segment spans residues serine 45–serine 178. 2 positions are modified to phosphoserine: serine 62 and serine 65. Tyrosine 72 bears the Phosphotyrosine mark. The interval tyrosine 72–leucine 75 is interaction with GRB2. Positions glycine 81–glycine 102 are disordered. Residues serine 84, serine 87, and serine 89 each carry the phosphoserine modification. Tyrosine 109 bears the Phosphotyrosine mark. At threonine 126 the chain carries Phosphothreonine. Residues isoleucine 128 to valine 133 are interaction with PTPN11. Residues tyrosine 130 and tyrosine 151 each carry the phosphotyrosine modification. The interaction with CSK stretch occupies residues tyrosine 151–valine 154. Serine 164 carries the phosphoserine modification. Tyrosine 170 bears the Phosphotyrosine mark. Residues tyrosine 170–serine 173 form an interaction with GRB2 region.

As to quaternary structure, homodimer; disulfide-linked. When phosphorylated, interacts with PTPN11/SHP2, GRB2 and CSK. In terms of processing, phosphorylated on tyrosines upon TCR activation; which promotes recruitment of PTPN11, GRB2 and CSK. As to expression, lymph node, spleen and thymus.

It localises to the cell membrane. Its function is as follows. Negatively regulates T-cell antigen receptor (TCR)-mediated signaling. Involved in positive selection of T-cells. The sequence is that of Signaling threshold-regulating transmembrane adapter 1 (Sit1) from Rattus norvegicus (Rat).